The following is a 702-amino-acid chain: MASGEGILTDGQWKKLEIATHNSGSLSSSPKSHTLFADLNIKSPTGGKGPVAGIPNRHVRRTHSGKHIRVKKEGAGGKGTWGKLLDTDDGDSCIDKNDPNYDSGEDAYDGLVDSPVSDPLNDYKKSVVSIIDEYFSTGDVKVAASDLRELGSSEYHPYFTKRLVSMAMDRHDKEKEMASVLLSALYADVILPDQIRDGFIRLLRSVDDLAVDILDAVNVLALFIARAIVDEILPPVFLVRSKKILPESCKGFQVIVTAEKSYLSAPHHAELVEKKWGGSTHTTVEETKKKISEILKEYVENGDTYEACRCIRELGVSFFHHEVVKRALVLAMDSPTAESLVLKLLKETAEEGLISSSQMVKGFFRVAESLDDLALDIPSAKKLFDSIVPKAISGGWLDDSFKITSDQDGEKSSQDGKLRQYKKDTVNIIQEYFLSDDIPELIRSLQDLGAPEYNPVFLKRLITLALDRKNREKEMASVLLSALHMELFSTEDFINGFIMLLESAEDTALDIMDASNELALFLARAVIDDVLAPLNLEDISTKLPPKSTGTETVRSARSLISARHAGERLLRSWGGGTGWIVEDAKDKISKLLEEYETGGVTSEACQCIRDLGMPFFNHEVVKKALVMAMEKQNDRLLNLLEECFGEGLITTNQMTKGFGRVNDSLDDLSLDIPNAKEKFELYASHAMDNGWILPEFGISATQ.

Residues 39–66 (LNIKSPTGGKGPVAGIPNRHVRRTHSGK) are disordered. Residues 57 to 66 (RHVRRTHSGK) show a composition bias toward basic residues. An MI 1 domain is found at 122–243 (DYKKSVVSII…PPVFLVRSKK (122 aa)). A Nuclear localization signal 1 motif is present at residues 273–280 (EKKWGGST). MI domains follow at residues 286-407 (ETKK…TSDQ), 420-541 (QYKK…DIST), and 583-702 (DAKD…SATQ). The Nuclear localization signal 2 motif lies at 458-465 (LKRLITLA).

It belongs to the PDCD4 family. In terms of assembly, binds to EIF4A1, S6K1 and S6K2. The association with ribosomes is modulated by cellular energy status and TOR activity. In terms of processing, phosphorylation by S6 kinases (e.g. S6K1 and S6K2) is modulated by cellular energy status and TOR activity. As to expression, mostly expressed in vegetative tissues, such as leaves, roots and stems, and, to a lower extent, in reproductive tissues, such as flower buds and flowers.

The protein resides in the nucleus. Its subcellular location is the cytoplasm. The protein localises to the cytosol. In terms of biological role, involved in target of rapamycin (TOR)-regulated translation control, especially under energy-deficient conditions. The chain is MA3 DOMAIN-CONTAINING TRANSLATION REGULATORY FACTOR 1 from Arabidopsis thaliana (Mouse-ear cress).